We begin with the raw amino-acid sequence, 353 residues long: tRNA-specific 2-thiouridylase MnmA 1 (353 aa).

Residues 9-16 (AMSGGVDS) and M35 contribute to the ATP site. Residue C98 is the Nucleophile of the active site. Cysteines 98 and 194 form a disulfide. G122 provides a ligand contact to ATP. An interaction with tRNA region spans residues 144–146 (KDQ). Residue C194 is the Cysteine persulfide intermediate of the active site. The segment at 300 to 301 (RY) is interaction with tRNA.

Belongs to the MnmA/TRMU family.

Its subcellular location is the cytoplasm. It carries out the reaction S-sulfanyl-L-cysteinyl-[protein] + uridine(34) in tRNA + AH2 + ATP = 2-thiouridine(34) in tRNA + L-cysteinyl-[protein] + A + AMP + diphosphate + H(+). In terms of biological role, catalyzes the 2-thiolation of uridine at the wobble position (U34) of tRNA, leading to the formation of s(2)U34. The polypeptide is tRNA-specific 2-thiouridylase MnmA 1 (Clostridium botulinum (strain Okra / Type B1)).